A 118-amino-acid polypeptide reads, in one-letter code: MKYVTLLLQVGVLYVFSLVGTWIQGVFHLSMPGSLIGMLILFLLLSTRVLPLKWFELGAEKLIVFLPLFLIPSTTGLMEYGSFLFSKESIIFLLVVASTVVTLIVSGYISQLLITTKK.

A run of 4 helical transmembrane segments spans residues 4-26, 33-52, 62-84, and 91-113; these read VTLL…IQGV, GSLI…VLPL, LIVF…GSFL, and IFLL…SQLL.

It belongs to the CidA/LrgA family. CidA subfamily.

It localises to the cell membrane. Its function is as follows. Increases the activity of extracellular murein hydrolases possibly by mediating their export via hole formation. Inhibited by the antiholin-like proteins LrgAB. In an unstressed cell, the LrgAB products probably inhibit the function of the CidA protein. When a cell is stressed by the addition of antibiotics or by other factors in the environment, CidA possibly oligomerizes within the bacterial cell membrane, creating lesions that disrupt the proton motive force, which in turn results in loss of cell viability. These lesions are also hypothesized to regulate the subsequent cell lysis by either allowing the murein hydrolases access to the cell wall substrate and/or regulating their activity by a possible change in the cell wall pH that results from loss of membrane potential. The protein is Holin-like protein CidA 2 (cidA2) of Bacillus cereus (strain ATCC 14579 / DSM 31 / CCUG 7414 / JCM 2152 / NBRC 15305 / NCIMB 9373 / NCTC 2599 / NRRL B-3711).